Reading from the N-terminus, the 99-residue chain is Large ribosomal subunit protein uL23 (99 aa).

It belongs to the universal ribosomal protein uL23 family. In terms of assembly, part of the 50S ribosomal subunit. Contacts protein L29, and trigger factor when it is bound to the ribosome.

In terms of biological role, one of the early assembly proteins it binds 23S rRNA. One of the proteins that surrounds the polypeptide exit tunnel on the outside of the ribosome. Forms the main docking site for trigger factor binding to the ribosome. The polypeptide is Large ribosomal subunit protein uL23 (Haemophilus influenzae (strain 86-028NP)).